Consider the following 503-residue polypeptide: MILISLCFTTFLAFLFLNPLLKRTTTTKPNQPPSPWRLPVIGYLHQLSLHPHRSFRSLSLRLWSAHAPSLRSCPYPRFSKYISSSDVAHDVMKTHDLKFANRPKTKAVDIIINGGRDVAFSSYGEYWRQMKSLCTVHLLGRQMVRSFEKVREEEITSVIWKLEKQSSSSLPVNLSDLLLNMSNDVICRIAVGRKYSREENTSDFENQLRKVMELLGAFPVGDYIPGLAWIDKVRGLDRKMEEVSKTFVEFLERVVQEHVDEGENKETFDFVDILLIQLEKTNEFELERSDIRLIILEFFLGGTTTTFTAIDWAMTLVVRHPESMKKLQEEIQTYSRNKLYVPEEEVENMKYLKAVIKEVFRLHPPGPLSIPRQLSEDVKLKDMIIPAGTMIIVFINAWAIHRDTEKWGPYAEEFKPERHLDLPLNFQGQDFNFIPFGSGRRLCPDIDFATMLIEVGLANFVYRFNWRVETRPLGDDDGLKQTGMEVCHKFPLIAFPSLASFTI.

A helical membrane pass occupies residues methionine 1–leucine 21. Residue cysteine 443 coordinates heme.

It belongs to the cytochrome P450 family. It depends on heme as a cofactor.

The protein resides in the membrane. This Arabidopsis thaliana (Mouse-ear cress) protein is Putative cytochrome P450 71A28 (CYP71A28).